The primary structure comprises 398 residues: Phosphoglycerate kinase (398 aa).

Substrate is bound by residues 23-25 (DLN), Arg-38, 61-64 (HFGR), Arg-119, and Arg-152. ATP-binding positions include Lys-202, Glu-324, and 354–357 (GGDT).

This sequence belongs to the phosphoglycerate kinase family. Monomer.

It localises to the cytoplasm. The enzyme catalyses (2R)-3-phosphoglycerate + ATP = (2R)-3-phospho-glyceroyl phosphate + ADP. The protein operates within carbohydrate degradation; glycolysis; pyruvate from D-glyceraldehyde 3-phosphate: step 2/5. This Bradyrhizobium diazoefficiens (strain JCM 10833 / BCRC 13528 / IAM 13628 / NBRC 14792 / USDA 110) protein is Phosphoglycerate kinase.